The sequence spans 142 residues: Large ribosomal subunit protein uL11 (142 aa).

The protein belongs to the universal ribosomal protein uL11 family. In terms of assembly, part of the ribosomal stalk of the 50S ribosomal subunit. Interacts with L10 and the large rRNA to form the base of the stalk. L10 forms an elongated spine to which L12 dimers bind in a sequential fashion forming a multimeric L10(L12)X complex. One or more lysine residues are methylated.

Its function is as follows. Forms part of the ribosomal stalk which helps the ribosome interact with GTP-bound translation factors. The polypeptide is Large ribosomal subunit protein uL11 (Rhodospirillum rubrum (strain ATCC 11170 / ATH 1.1.1 / DSM 467 / LMG 4362 / NCIMB 8255 / S1)).